Here is a 585-residue protein sequence, read N- to C-terminus: Organic cation transporter 1 (585 aa).

Over 1-40 the chain is Cytoplasmic; it reads MSFQAMETFAEISQEILMSATKPPDFDFVLEQVGNYGTYQ. A helical transmembrane segment spans residues 41 to 61; it reads IVFFFIICLPTSLPSAFSAFN. The Extracellular segment spans residues 62–155; it reads IPFVVGNPPH…LVCDQQAWIE (94 aa). Residues Asn87, Asn98, and Asn133 are each glycosylated (N-linked (GlcNAc...) asparagine). Residues 156-176 form a helical membrane-spanning segment; that stretch reads ISTTSFYVGSFIGNCLFGYVA. The Cytoplasmic segment spans residues 177–184; it reads DKFGRRRS. A helical membrane pass occupies residues 185–205; that stretch reads FFVILTVLIVCGTASSFAKDI. Residues 206–212 are Extracellular-facing; that stretch reads ESFIILR. A helical membrane pass occupies residues 213 to 233; sequence FFTGLAFPALFQIPFIICMEF. At 234-243 the chain is on the cytoplasmic side; the sequence is MGNSGRIFSG. The helical transmembrane segment at 244–264 threads the bilayer; it reads LMTSLFFGAAMALLGVVAMFI. The Extracellular portion of the chain corresponds to 265-269; that stretch reads RRWRQ. A helical transmembrane segment spans residues 270–290; the sequence is LTFFCNAPFAFYIIYYFFLPE. At 291-360 the chain is on the cytoplasmic side; the sequence is SPRWSVSVGK…FKTPNLRRKT (70 aa). A helical transmembrane segment spans residues 361-381; it reads LIVTYIWVMNAIIYNGLTLNV. The Extracellular portion of the chain corresponds to 382–389; that stretch reads SNLPVDDY. Residues 390–410 traverse the membrane as a helical segment; the sequence is WSFIINGAVELPGYFVVWPLL. Residues 411–416 lie on the Cytoplasmic side of the membrane; the sequence is QCAGRR. The chain crosses the membrane as a helical span at residues 417–437; that stretch reads WTLAATMIVCGIGCVSAMFMP. The Extracellular portion of the chain corresponds to 438 to 446; the sequence is DGYPWLVAS. Residues 447 to 467 form a helical membrane-spanning segment; the sequence is ASFIGKFGVGSGFAVIYIFAG. Over 468 to 476 the chain is Cytoplasmic; sequence ELYPTVVRA. A helical transmembrane segment spans residues 477–497; it reads IGMGMSSMVAGSGLLLAPHIV. Residues 498 to 504 lie on the Extracellular side of the membrane; sequence NLGKIVK. Residues 505-525 form a helical membrane-spanning segment; it reads ILPLLIMGLMALSAGILTFFL. The Cytoplasmic portion of the chain corresponds to 526 to 585; sequence PETLGAPLPMTIEDAENFGKKPEPDSGMFTQAAKKRESQPLLEPHTPMDRRRRSSRLMNI. Residues 544 to 585 form a disordered region; it reads GKKPEPDSGMFTQAAKKRESQPLLEPHTPMDRRRRSSRLMNI. Over residues 575-585 the composition is skewed to basic residues; the sequence is RRRRSSRLMNI.

This sequence belongs to the major facilitator (TC 2.A.1) superfamily. Organic cation transporter (TC 2.A.1.19) family.

It is found in the membrane. In terms of biological role, transports organic cations such as tetraethylammonium (TEA). Displays a broad substrate specificity. The polypeptide is Organic cation transporter 1 (oct-1) (Caenorhabditis elegans).